The sequence spans 295 residues: Small ribosomal subunit protein uS2 (295 aa).

Belongs to the universal ribosomal protein uS2 family. In terms of assembly, component of the small ribosomal subunit. Mature ribosomes consist of a small (40S) and a large (60S) subunit. The 40S subunit contains about 33 different proteins and 1 molecule of RNA (18S). The 60S subunit contains about 49 different proteins and 3 molecules of RNA (25S, 5.8S and 5S). Interacts with RPS21.

The protein resides in the cytoplasm. Required for the assembly and/or stability of the 40S ribosomal subunit. Required for the processing of the 20S rRNA-precursor to mature 18S rRNA in a late step of the maturation of 40S ribosomal subunits. The chain is Small ribosomal subunit protein uS2 from Paracoccidioides brasiliensis (strain Pb03).